The primary structure comprises 357 residues: Mannonate dehydratase (357 aa).

Belongs to the mannonate dehydratase family. The cofactor is Fe(2+). Mn(2+) serves as cofactor.

It catalyses the reaction D-mannonate = 2-dehydro-3-deoxy-D-gluconate + H2O. The protein operates within carbohydrate metabolism; pentose and glucuronate interconversion. In terms of biological role, catalyzes the dehydration of D-mannonate. The sequence is that of Mannonate dehydratase from Enterococcus faecalis (strain ATCC 700802 / V583).